An 87-amino-acid chain; its full sequence is Large ribosomal subunit protein bL27 (87 aa).

The tract at residues 1-21 is disordered; the sequence is MAHKKAGGSSRNGRDSESKRL.

This sequence belongs to the bacterial ribosomal protein bL27 family.

The chain is Large ribosomal subunit protein bL27 from Burkholderia mallei (strain NCTC 10247).